The chain runs to 486 residues: Patatin-like phospholipase domain-containing protein 2 (486 aa).

The Cytoplasmic portion of the chain corresponds to 1 to 8; sequence MFPRETKW. A helical transmembrane segment spans residues 9 to 29; sequence NISFAGCGFLGVYHIGVASCL. Positions 10–179 constitute a PNPLA domain; it reads ISFAGCGFLG…SDNLPLYELK (170 aa). The short motif at 14–19 is the GXGXXG element; sequence GCGFLG. Over 30–42 the chain is Extracellular; it reads REHAPFLVANATH. N-linked (GlcNAc...) asparagine glycosylation occurs at Asn-39. A helical transmembrane segment spans residues 43 to 63; sequence IYGASAGALTATALVTGACLG. The GXSXG motif lies at 45–49; sequence GASAG. Ser-47 serves as the catalytic Nucleophile. Over 64 to 137 the chain is Cytoplasmic; sequence EAGANIIEVS…IISHFSSKDE (74 aa). A Glycyl lysine isopeptide (Lys-Gly) (interchain with G-Cter in ubiquitin) cross-link involves residue Lys-92. A helical transmembrane segment spans residues 138 to 158; it reads LIQANVCSTFIPVYCGLIPPT. Residues 159–331 are Extracellular-facing; the sequence is LQGVRYVDGG…TTLSNMLPVR (173 aa). Asp-166 serves as the catalytic Proton acceptor. Positions 166-168 match the DGA/G motif; sequence DGG. Residues 332-352 form a helical membrane-spanning segment; sequence LATAMMVPYTLPLESAVSFTI. Residues 353–486 lie on the Cytoplasmic side of the membrane; sequence RLLEWLPDVP…PQDPPGLPPC (134 aa). A Phosphoserine; in vitro modification is found at Ser-374. 2 positions are modified to phosphoserine; by PKA: Ser-396 and Ser-406. 2 positions are modified to phosphoserine; in vitro: Ser-430 and Ser-468. Residues 465–476 show a composition bias toward low complexity; that stretch reads APASPTAADPAT. Residues 465–486 are disordered; the sequence is APASPTAADPATPQDPPGLPPC. A compositionally biased stretch (pro residues) spans 477–486; that stretch reads PQDPPGLPPC.

As to quaternary structure, interacts with ABHD5; this association stimulates PNPLA2 triglyceride hydrolase activity. Interacts with SERPINF1; this interaction stimulates the phospholipase A2 activity of PNPLA2. Despite a colocalization in lipid droplets, it probably does not interact with PLIN. Interacts with PLIN5; prevents interaction with ABHD5. Interacts with FAF2. Post-translationally, phosphorylation at Ser-406 by PKA is increased during fasting and moderate intensity exercise, and moderately increases lipolytic activity. Ubiquitinated by PEX2 in response to reactive oxygen species (ROS), leading to its degradation. Ubiquitination is stimulated by LDAH. Expressed at high levels in white and brown adipose tissue, and to a lesser degree in testis and cardiac muscle. Barely detected in liver, spleen, thymus, kidney, skeletal muscle, and brain. Among the white adipose depots, gonadal fat showed the highest level of expression compared with inguinal and renal white adipose tissues.

It is found in the lipid droplet. It localises to the cell membrane. The protein localises to the cytoplasm. It carries out the reaction a triacylglycerol + H2O = a diacylglycerol + a fatty acid + H(+). It catalyses the reaction a triacylglycerol + H2O = a 1,2-diacylglycerol + a fatty acid + H(+). The catalysed reaction is a triacylglycerol + H2O = a 1,3-diacylglycerol + a fatty acid + H(+). The enzyme catalyses a triacyl-sn-glycerol + H2O = a 2,3-diacyl-sn-glycerol + a fatty acid + H(+). It carries out the reaction a triacyl-sn-glycerol + H2O = a 1,3-diacyl-sn-glycerol + a fatty acid + H(+). It catalyses the reaction 1,2,3-tri-(9Z-octadecenoyl)-glycerol + H2O = 1,3-di-(9Z-octadecenoyl)-glycerol + (9Z)-octadecenoate + H(+). The catalysed reaction is 1,2,3-tri-(9Z)-hexadecenoylglycerol + H2O = 1,3-di-(9Z)-hexadecenoylglycerol + (9Z)-hexadecenoate + H(+). The enzyme catalyses 1,2,3-tri-(9Z,12Z)-octadecadienoylglycerol + H2O = 1,3-di-(9Z,12Z)-octadecadienoylglycerol + (9Z,12Z)-octadecadienoate + H(+). It carries out the reaction 1,2,3-tri-(9Z,12Z,15Z)-octadecatrienoylglycerol + H2O = 1,3-di-(9Z,12Z,15Z)-octadecatrienoylglycerol + (9Z,12Z,15Z)-octadecatrienoate + H(+). It catalyses the reaction 1,3-di-(9Z)-octadecenoyl-2-hexadecanoylglycerol + H2O = 1,3-di-(9Z-octadecenoyl)-glycerol + hexadecanoate + H(+). The catalysed reaction is 1,2-di-(9Z)-octadecenoyl-3-hexadecanoyl-sn-glycerol + H2O = 1-(9Z)-octadecenoyl-3-hexadecanoyl-sn-glycerol + (9Z)-octadecenoate + H(+). The enzyme catalyses 1-hexadecanoyl-2,3-di-(9Z)-octadecenoyl-sn-glycerol + H2O = 1-hexadecanoyl-3-(9Z)-octadecenoyl-sn-glycerol + (9Z)-octadecenoate + H(+). It carries out the reaction 1,2,3-tri-(9Z-octadecenoyl)-glycerol + H2O = 2,3-di-(9Z)-octadecenoyl-sn-glycerol + (9Z)-octadecenoate + H(+). It catalyses the reaction 1,2,3-tri-(9Z)-hexadecenoylglycerol + H2O = 2,3-di-(9Z)-hexadecenoyl-sn-glycerol + (9Z)-hexadecenoate + H(+). The catalysed reaction is 1,2,3-tri-(9Z,12Z)-octadecadienoylglycerol + H2O = 2,3-di-(9Z,12Z)-octadecadienoyl-sn-glycerol + (9Z,12Z)-octadecadienoate + H(+). The enzyme catalyses 1,2,3-tri-(9Z,12Z,15Z)-octadecatrienoylglycerol + H2O = 2,3-di-(9Z,12Z,15Z)-octadecatrienoyl-sn-glycerol + (9Z,12Z,15Z)-octadecatrienoate + H(+). It carries out the reaction 1,3-di-(9Z)-octadecenoyl-2-hexadecanoylglycerol + H2O = 2-hexadecanoyl-3-(9Z)-octadecenoyl-sn-glycerol + (9Z)-octadecenoate + H(+). It catalyses the reaction 1-hexadecanoyl-2,3-di-(9Z)-octadecenoyl-sn-glycerol + H2O = 2,3-di-(9Z)-octadecenoyl-sn-glycerol + hexadecanoate + H(+). The catalysed reaction is 1,2-di-(9Z)-octadecenoyl-3-hexadecanoyl-sn-glycerol + H2O = 2-(9Z-octadecenoyl)-3-hexadecanoyl-sn-glycerol + (9Z)-octadecenoate + H(+). The enzyme catalyses 1,2-di-(9Z-octadecenoyl)-glycerol + (9Z)-octadecenoate + H(+) = 1,2,3-tri-(9Z-octadecenoyl)-glycerol + H2O. It carries out the reaction a 1-acylglycerol + a 1,3-diacylglycerol = a triacylglycerol + glycerol. It catalyses the reaction a 1-acylglycerol + a 1,2-diacylglycerol = a triacylglycerol + glycerol. The catalysed reaction is 2 a 1-acylglycerol = a 1,2-diacylglycerol + glycerol. The enzyme catalyses a triacylglycerol + all-trans-retinol = an all-trans-retinyl ester + a diacylglycerol. It carries out the reaction 1-(9Z-octadecenoyl)-glycerol + 1,3-di-(9Z-octadecenoyl)-glycerol = 1,2,3-tri-(9Z-octadecenoyl)-glycerol + glycerol. It catalyses the reaction 1-(9Z-octadecenoyl)-glycerol + 1,2-di-(9Z-octadecenoyl)-glycerol = 1,2,3-tri-(9Z-octadecenoyl)-glycerol + glycerol. The catalysed reaction is 2 1-(9Z-octadecenoyl)-glycerol = 1,2-di-(9Z-octadecenoyl)-glycerol + glycerol. The enzyme catalyses 1,2,3-tri-(9Z-octadecenoyl)-glycerol + all-trans-retinol = all-trans-retinyl 9Z-octadecenoate + di-(9Z)-octadecenoylglycerol. It carries out the reaction a 1,2-diacyl-sn-glycero-3-phosphocholine + H2O = a 1-acyl-sn-glycero-3-phosphocholine + a fatty acid + H(+). It catalyses the reaction 1,2,3-tri-(9Z-octadecenoyl)-glycerol + 9-hydroxy-octadecanoate = 9-(9Z-octadecenoyloxy)-octadecanoate + 2,3-di-(9Z)-octadecenoyl-sn-glycerol. The catalysed reaction is 1-hexadecanoyl-2,3-di-(9Z)-octadecenoyl-sn-glycerol + 9-hydroxy-octadecanoate = 9-hexadecanoyloxy-octadecanoate + 2,3-di-(9Z)-octadecenoyl-sn-glycerol. The enzyme catalyses 1,2,3-tri-(10Z)-heptadecenoylglycerol + 9-hydroxy-octadecanoate = 2,3-di-(10Z-heptadecenoyl)-sn-glycerol + 9-(10Z-heptadecenoyloxy)-octadecanoate. It carries out the reaction 1,2,3-tri-(9Z,12Z)-octadecadienoylglycerol + 9-hydroxy-octadecanoate = 2,3-di-(9Z,12Z)-octadecadienoyl-sn-glycerol + 9-(9Z,12Z-octadecadienoyloxy)-octadecanoate. It catalyses the reaction 1,2,3-tri-(9Z)-hexadecenoylglycerol + 9-hydroxy-octadecanoate = 2,3-di-(9Z)-hexadecenoyl-sn-glycerol + 9-(9Z-hexadecenoyloxy)-octadecanoate. The catalysed reaction is 9-hydroxy-octadecanoate + 1,2-di-(9Z-octadecenoyl)-sn-glycerol = 9-(9Z-octadecenoyloxy)-octadecanoate + 2-(9Z-octadecenoyl)-glycerol. The enzyme catalyses 1-hexadecanoyl-2,3-di-(9Z)-octadecenoyl-sn-glycerol + 9-hydroxy-octadecanoate = 1-hexadecanoyl-3-(9Z)-octadecenoyl-sn-glycerol + 9-(9Z-octadecenoyloxy)-octadecanoate. It participates in glycerolipid metabolism; triacylglycerol degradation. Its activity is regulated as follows. Stimulated by PKA-dependent PLIN phosphorylation. Its function is as follows. Catalyzes the initial step in triglyceride hydrolysis in adipocyte and non-adipocyte lipid droplets. Exhibits a strong preference for the hydrolysis of long-chain fatty acid esters at the sn-2 position of the glycerol backbone and acts coordinately with LIPE/HLS and DGAT2 within the lipolytic cascade. Also possesses acylglycerol transacylase and phospholipase A2 activities. Transfers fatty acid from triglyceride to retinol, hydrolyzes retinylesters, and generates 1,3-diacylglycerol from triglycerides. Regulates adiposome size and may be involved in the degradation of adiposomes. Catalyzes the formation of an ester bond between hydroxy fatty acids and fatty acids derived from triglycerides or diglycerides to generate fatty acid esters of hydroxy fatty acids (FAHFAs) in adipocytes. Acts antagonistically with LDAH in regulation of cellular lipid stores. Inhibits LDAH-stimulated lipid droplet fusion. May play an important role in energy homeostasis. May play a role in the response of the organism to starvation, enhancing hydrolysis of triglycerides and providing free fatty acids to other tissues to be oxidized in situations of energy depletion. The sequence is that of Patatin-like phospholipase domain-containing protein 2 from Mus musculus (Mouse).